A 562-amino-acid polypeptide reads, in one-letter code: Putative transport protein Spro_1639 (562 aa).

A run of 5 helical transmembrane segments spans residues 8 to 28 (LLNGNYILLLFVVLALGLCLG), 37 to 57 (LGNSIGVLVVSLLLGQQHFAI), 66 to 86 (FMLFIFCVGVEAGPNFFSIFF), 94 to 114 (MLALVMVGSAMVIAIGLGKLF), and 158 to 178 (HLSLGYALTYLIGLVSLIFGA). RCK C-terminal domains are found at residues 202–288 (LDTD…SFRN) and 290–373 (KEVF…KIGF). 5 helical membrane passes run 383-403 (LLAFCAFFIIGLLIGQITIQF), 406-426 (FSFGIGNAAGLLMAGIMLGFL), 447-467 (FGLMVFMAGVGLSAGAGIGNS), 475-495 (MLIAGLIVSLVPVVICFLFGA), and 541-561 (IANVLLTLAGSLIVVLWPGIL).

The protein belongs to the AAE transporter (TC 2.A.81) family. YbjL subfamily.

It is found in the cell membrane. This Serratia proteamaculans (strain 568) protein is Putative transport protein Spro_1639.